A 188-amino-acid polypeptide reads, in one-letter code: Protein GrpE (188 aa).

The segment at 1-30 (MTKKTSHHKAEQKEKRAGEESGRESEVLDH) is disordered. Basic and acidic residues predominate over residues 8-30 (HKAEQKEKRAGEESGRESEVLDH).

The protein belongs to the GrpE family. Homodimer.

The protein resides in the cytoplasm. In terms of biological role, participates actively in the response to hyperosmotic and heat shock by preventing the aggregation of stress-denatured proteins, in association with DnaK and GrpE. It is the nucleotide exchange factor for DnaK and may function as a thermosensor. Unfolded proteins bind initially to DnaJ; upon interaction with the DnaJ-bound protein, DnaK hydrolyzes its bound ATP, resulting in the formation of a stable complex. GrpE releases ADP from DnaK; ATP binding to DnaK triggers the release of the substrate protein, thus completing the reaction cycle. Several rounds of ATP-dependent interactions between DnaJ, DnaK and GrpE are required for fully efficient folding. This Chlorobium phaeobacteroides (strain BS1) protein is Protein GrpE.